A 294-amino-acid polypeptide reads, in one-letter code: Store-operated calcium entry regulator STIMATE (294 aa).

The interval 1-22 (MQGPAGNASRGLPGGPPSTVAS) is disordered. Residues 1-28 (MQGPAGNASRGLPGGPPSTVASGAGRCE) lie on the Cytoplasmic side of the membrane. A run of 3 helical transmembrane segments spans residues 29–49 (SGAL…VVAF), 69–89 (IWFL…FANV), and 102–122 (LYLI…YVGV). The GXXXG motif motif lies at 149-153 (GAWVG). 2 consecutive transmembrane segments (helical) span residues 156–176 (ALYI…LLIL) and 194–214 (LAIV…WVVD). Residues 215 to 294 (NFLMRKGKTK…KKKHRFGLPV (80 aa)) lie on the Cytoplasmic side of the membrane. The tract at residues 227 to 268 (LEERGANQDSRNGSKVRYRRAASHEESESEILISADDEMEES) is disordered. The interval 241 to 246 (KVRYRR) is required for localization in the endoplasmic reticulum.

Belongs to the STIMATE family. As to quaternary structure, homooligomer. Interacts with STIM1. In terms of tissue distribution, widely expressed.

It localises to the endoplasmic reticulum membrane. Acts as a regulator of store-operated Ca(2+) entry (SOCE) at junctional sites that connect the endoplasmic reticulum (ER) and plasma membrane (PM), called ER-plasma membrane (ER-PM) junction or cortical ER. SOCE is a Ca(2+) influx following depletion of intracellular Ca(2+) stores. Acts by interacting with STIM1, promoting STIM1 conformational switch. Involved in STIM1 relocalization to ER-PM junctions. Contributes to the maintenance and reorganization of store-dependent ER-PM junctions. The chain is Store-operated calcium entry regulator STIMATE from Homo sapiens (Human).